Consider the following 621-residue polypeptide: Myosin-binding protein C, slow-type (621 aa).

Ig-like C2-type domains are found at residues 1–53, 54–142, and 144–241; these read EEIV…VDLR, PLKI…HVID, and PKII…LWIS. Thr-28 carries the phosphothreonine modification. The residue at position 233 (Ser-233) is a Phosphoserine. Fibronectin type-III domains are found at residues 244-343, 344-459, and 556-621; these read LRLA…TSPP, TLLA…IEPP, and PPQA…VIGN. Thr-420 is subject to Phosphothreonine. The residue at position 445 (Tyr-445) is a Phosphotyrosine. The Ig-like C2-type 4 domain occupies 459–553; it reads PKIRIPRHLK…ASIDIQIVDR (95 aa).

Belongs to the immunoglobulin superfamily. MyBP family. As to quaternary structure, interacts with USP25 (isoform USP25m only); the interaction prevents proteasomal degradation of MYBPC1.

Thick filament-associated protein located in the crossbridge region of vertebrate striated muscle a bands. Slow skeletal protein that binds to both myosin and actin. In vitro, binds to native thin filaments and modifies the activity of actin-activated myosin ATPase. May modulate muscle contraction or may play a more structural role. The chain is Myosin-binding protein C, slow-type (Mybpc1) from Rattus norvegicus (Rat).